Reading from the N-terminus, the 218-residue chain is MSYYDIDAILTDAEKIPCTFQIDVPDLGYLDNQPGHTLKSGSRVALPIWLAEMLAIANTGAVDMDDPSQSSKSFITFDLPPALGNDVVQALKADPRSVPLRDQSAHFYALATHMMELSEEPELSAVLRKTFVSRAAEIALHARKVGGGGSSYHGRDGGGAGGKGKGKATKDDNASNLGVGGAGEDFLRGLDEWERKLFRSAHDGTKASKEWMENVKKR.

The span at 147 to 163 shows a compositional bias: gly residues; it reads GGGSSYHGRDGGGAGGK. Residues 147-182 are disordered; that stretch reads GGGSSYHGRDGGGAGGKGKGKATKDDNASNLGVGGA.

The protein belongs to the GINS3/PSF3 family. Component of the GINS complex which is a heterotetramer of div-26/sld5, drc-1/psf1, drc-2/psf2 and drc-3/psf3.

The protein localises to the nucleus. Functionally, the GINS complex plays an essential role in the initiation of DNA replication. The polypeptide is DNA replication complex GINS protein psf3 (drc-3) (Neurospora crassa (strain ATCC 24698 / 74-OR23-1A / CBS 708.71 / DSM 1257 / FGSC 987)).